We begin with the raw amino-acid sequence, 692 residues long: MAREFSLENTRNIGIMAHIDAGKTTATERILYYTGRIHKIGETHEGASQMDWMEQEQERGITITSAATTAQWKGHRVNIIDTPGHVDFTVEVERSLRVLDGAVAVLDAQSGVEPQTETVWRQATTYGVPRIVFVNKMDKIGADFLYSVGTIHDRLQANAHPIQLPIGAEDEFNGIIDLVEECAYMYGNDLGTDIQRVEIPEEHKELAEEYRGKLIEAVAELDEEMMMKYLEGEEITVEELKAGIRKATTSVEFFPVICGSAFKNKGVQILLDAVIDYLPSPLDVPAIKGTLPDTDEEVERKSSDEEPFSALAFKIMTDPYVGKLTFFRVYSGVLNSGSYVKNSTKGKRERVGRILQMHANSREEISTVYAGDIAAAVGLKDTTTGDTLCDEKSLVILESMEFPEPVISVAIEPKSKADQDKMGTALSKLSEEDPTFRAHTDQETGQTIIAGMGELHLDIIVDRMRREFKVEANVGAPQVAYRETFRAAAKVEGKFARQSGGRGQFGHVWIEFEPNEEGKGFEFENKIVGGVVPREYIPAVGAGLEDALKNGVLAGYPVVDIKAALVDGSYHDVDSSEMAFKIAASMALKAAVSKCNPVILEPMMKVEVVIPEEYMGDIMGDVTSRRGRVEGMEARGNAQVVRAMVPLSEMFGYATSLRSNTQGRGTFSMVFDHYEEVPKSVSEEIIKKNKGE.

The region spanning 8 to 282 (ENTRNIGIMA…AVIDYLPSPL (275 aa)) is the tr-type G domain. GTP contacts are provided by residues 17 to 24 (AHIDAGKT), 81 to 85 (DTPGH), and 135 to 138 (NKMD).

This sequence belongs to the TRAFAC class translation factor GTPase superfamily. Classic translation factor GTPase family. EF-G/EF-2 subfamily.

It localises to the cytoplasm. Catalyzes the GTP-dependent ribosomal translocation step during translation elongation. During this step, the ribosome changes from the pre-translocational (PRE) to the post-translocational (POST) state as the newly formed A-site-bound peptidyl-tRNA and P-site-bound deacylated tRNA move to the P and E sites, respectively. Catalyzes the coordinated movement of the two tRNA molecules, the mRNA and conformational changes in the ribosome. This chain is Elongation factor G, found in Bacillus cereus (strain ZK / E33L).